Consider the following 250-residue polypeptide: Malonyl-[acyl-carrier protein] O-methyltransferase (250 aa).

It belongs to the methyltransferase superfamily.

The enzyme catalyses malonyl-[ACP] + S-adenosyl-L-methionine = malonyl-[ACP] methyl ester + S-adenosyl-L-homocysteine. The protein operates within cofactor biosynthesis; biotin biosynthesis. Converts the free carboxyl group of a malonyl-thioester to its methyl ester by transfer of a methyl group from S-adenosyl-L-methionine (SAM). It allows to synthesize pimeloyl-ACP via the fatty acid synthetic pathway. The protein is Malonyl-[acyl-carrier protein] O-methyltransferase of Neorickettsia risticii (strain Illinois).